The primary structure comprises 846 residues: Aminopeptidase N (846 aa).

Residues Glu120 and 252 to 256 (GAMEN) contribute to the substrate site. His288 is a Zn(2+) binding site. The active-site Proton acceptor is Glu289. Zn(2+) contacts are provided by His292 and Glu311.

It belongs to the peptidase M1 family. As to quaternary structure, monomer. Zn(2+) serves as cofactor.

The protein resides in the cytoplasm. The catalysed reaction is Release of an N-terminal amino acid, Xaa-|-Yaa- from a peptide, amide or arylamide. Xaa is preferably Ala, but may be most amino acids including Pro (slow action). When a terminal hydrophobic residue is followed by a prolyl residue, the two may be released as an intact Xaa-Pro dipeptide.. Aminopeptidase with broad substrate specificity to several peptides. It has more affinity for oligopeptides than for dipeptides. It plays an essential role in the metabolism, it may be involved in nitrogen supply or protein turnover. The protein is Aminopeptidase N (pepN) of Lactococcus lactis subsp. cremoris (strain MG1363).